A 296-amino-acid chain; its full sequence is tRNA dimethylallyltransferase (296 aa).

2–9 is an ATP binding site; that stretch reads GPTASGKT. 4 to 9 provides a ligand contact to substrate; that stretch reads TASGKT. 3 interaction with substrate tRNA regions span residues 27-30, 151-155, and 232-237; these read DSAL, QRLSR, and RCVGYR.

The protein belongs to the IPP transferase family. Monomer. It depends on Mg(2+) as a cofactor.

It catalyses the reaction adenosine(37) in tRNA + dimethylallyl diphosphate = N(6)-dimethylallyladenosine(37) in tRNA + diphosphate. Functionally, catalyzes the transfer of a dimethylallyl group onto the adenine at position 37 in tRNAs that read codons beginning with uridine, leading to the formation of N6-(dimethylallyl)adenosine (i(6)A). This chain is tRNA dimethylallyltransferase, found in Shewanella woodyi (strain ATCC 51908 / MS32).